Reading from the N-terminus, the 153-residue chain is UPF0756 membrane protein Lm4b_01579 (153 aa).

4 consecutive transmembrane segments (helical) span residues 6 to 26 (MLFLLLFLLLGLIAKNNSLII), 54 to 74 (WGVTIITVAILIPIATGQIGF), 80 to 100 (SFKSAAGWIGLGAGIAVSILA), and 117 to 137 (LVFGTILAVVLFRGIAAGPVI).

This sequence belongs to the UPF0756 family.

The protein localises to the cell membrane. The polypeptide is UPF0756 membrane protein Lm4b_01579 (Listeria monocytogenes serotype 4b (strain CLIP80459)).